Reading from the N-terminus, the 212-residue chain is Large ribosomal subunit protein uL1 (212 aa).

This sequence belongs to the universal ribosomal protein uL1 family. As to quaternary structure, part of the 50S ribosomal subunit.

Functionally, binds directly to 23S rRNA. Probably involved in E site tRNA release. Protein L1 is also a translational repressor protein, it controls the translation of its operon by binding to its mRNA. This Haloferax volcanii (strain ATCC 29605 / DSM 3757 / JCM 8879 / NBRC 14742 / NCIMB 2012 / VKM B-1768 / DS2) (Halobacterium volcanii) protein is Large ribosomal subunit protein uL1.